The chain runs to 916 residues: Phosphoenolpyruvate carboxylase (916 aa).

Catalysis depends on residues histidine 144 and lysine 578.

Belongs to the PEPCase type 1 family. Requires Mg(2+) as cofactor.

It catalyses the reaction oxaloacetate + phosphate = phosphoenolpyruvate + hydrogencarbonate. In terms of biological role, forms oxaloacetate, a four-carbon dicarboxylic acid source for the tricarboxylic acid cycle. This Aromatoleum aromaticum (strain DSM 19018 / LMG 30748 / EbN1) (Azoarcus sp. (strain EbN1)) protein is Phosphoenolpyruvate carboxylase.